The primary structure comprises 72 residues: Translation initiation factor IF-1 (72 aa).

The region spanning 1 to 72 is the S1-like domain; it reads MAKEDVIEFS…TKGRITFRYK (72 aa).

It belongs to the IF-1 family. Component of the 30S ribosomal translation pre-initiation complex which assembles on the 30S ribosome in the order IF-2 and IF-3, IF-1 and N-formylmethionyl-tRNA(fMet); mRNA recruitment can occur at any time during PIC assembly.

It is found in the cytoplasm. Its function is as follows. One of the essential components for the initiation of protein synthesis. Stabilizes the binding of IF-2 and IF-3 on the 30S subunit to which N-formylmethionyl-tRNA(fMet) subsequently binds. Helps modulate mRNA selection, yielding the 30S pre-initiation complex (PIC). Upon addition of the 50S ribosomal subunit IF-1, IF-2 and IF-3 are released leaving the mature 70S translation initiation complex. This is Translation initiation factor IF-1 from Paramagnetospirillum magneticum (strain ATCC 700264 / AMB-1) (Magnetospirillum magneticum).